A 522-amino-acid chain; its full sequence is 5,6-dihydroxyindole-2-carboxylic acid oxidase (522 aa).

The N-terminal stretch at methionine 1–alanine 21 is a signal peptide. Topologically, residues glutamine 22–threonine 470 are lumenal, melanosome. 5 disulfide bridges follow: cysteine 27/cysteine 38, cysteine 39/cysteine 59, cysteine 50/cysteine 89, cysteine 91/cysteine 100, and cysteine 103/cysteine 112. Asparagine 164 and asparagine 171 each carry an N-linked (GlcNAc...) asparagine glycan. The Zn(2+) site is built by histidine 182, histidine 205, and histidine 214. Intrachain disulfides connect cysteine 248–cysteine 251 and cysteine 280–cysteine 293. N-linked (GlcNAc...) asparagine glycosylation occurs at asparagine 294. Residues histidine 367 and histidine 371 each coordinate Zn(2+). N-linked (GlcNAc...) asparagine glycosylation is present at asparagine 375. Histidine 394 contacts Zn(2+). Residues valine 471–valine 491 traverse the membrane as a helical segment. The Cytoplasmic portion of the chain corresponds to histidine 492 to valine 522.

This sequence belongs to the tyrosinase family. Cu(2+) is required as a cofactor. It depends on Zn(2+) as a cofactor.

It is found in the melanosome membrane. The catalysed reaction is 2 5,6-dihydroxyindole-2-carboxylate + O2 = 2 indole-5,6-quinone-2-carboxylate + 2 H2O. It functions in the pathway pigment biosynthesis; melanin biosynthesis. Functionally, plays a role in melanin biosynthesis. Catalyzes the oxidation of 5,6-dihydroxyindole-2-carboxylic acid (DHICA) into indole-5,6-quinone-2-carboxylic acid. May regulate or influence the type of melanin synthesized. Also to a lower extent, capable of hydroxylating tyrosine and producing melanin. The polypeptide is 5,6-dihydroxyindole-2-carboxylic acid oxidase (tyrp1) (Carassius auratus (Goldfish)).